We begin with the raw amino-acid sequence, 323 residues long: Beta-ketoacyl-[acyl-carrier-protein] synthase III (323 aa).

Active-site residues include cysteine 114 and histidine 250. The segment at 251–255 (QANIR) is ACP-binding. Residue asparagine 280 is part of the active site.

This sequence belongs to the thiolase-like superfamily. FabH family. As to quaternary structure, homodimer.

It localises to the cytoplasm. It catalyses the reaction malonyl-[ACP] + acetyl-CoA + H(+) = 3-oxobutanoyl-[ACP] + CO2 + CoA. The protein operates within lipid metabolism; fatty acid biosynthesis. Its function is as follows. Catalyzes the condensation reaction of fatty acid synthesis by the addition to an acyl acceptor of two carbons from malonyl-ACP. Catalyzes the first condensation reaction which initiates fatty acid synthesis and may therefore play a role in governing the total rate of fatty acid production. Possesses both acetoacetyl-ACP synthase and acetyl transacylase activities. Its substrate specificity determines the biosynthesis of branched-chain and/or straight-chain of fatty acids. This chain is Beta-ketoacyl-[acyl-carrier-protein] synthase III, found in Ruegeria pomeroyi (strain ATCC 700808 / DSM 15171 / DSS-3) (Silicibacter pomeroyi).